The chain runs to 256 residues: 5-keto-4-deoxy-D-glucarate aldolase (256 aa).

The active-site Proton acceptor is the His-50. Gln-151 contacts substrate. Glu-153 contacts Mg(2+). Substrate is bound by residues Ser-178 and Asp-179. Residue Asp-179 coordinates Mg(2+).

It belongs to the HpcH/HpaI aldolase family. KDGluc aldolase subfamily. In terms of assembly, homohexamer; trimer of dimers. The cofactor is Mg(2+).

The enzyme catalyses 5-dehydro-4-deoxy-D-glucarate = 2-hydroxy-3-oxopropanoate + pyruvate. It catalyses the reaction 2-dehydro-3-deoxy-D-glucarate = 2-hydroxy-3-oxopropanoate + pyruvate. The protein operates within carbohydrate acid metabolism; galactarate degradation; D-glycerate from galactarate: step 2/3. Functionally, catalyzes the reversible retro-aldol cleavage of both 5-keto-4-deoxy-D-glucarate and 2-keto-3-deoxy-D-glucarate to pyruvate and tartronic semialdehyde. The polypeptide is 5-keto-4-deoxy-D-glucarate aldolase (Shigella boydii serotype 4 (strain Sb227)).